The chain runs to 199 residues: NAD(P)H dehydrogenase (quinone) (199 aa).

In terms of domain architecture, Flavodoxin-like spans 4–190 (ILVLYYSSWG…EGARFQGKRL (187 aa)). FMN is bound by residues 10–15 (SSWGHM) and 78–80 (TRY). Tryptophan 12 provides a ligand contact to NAD(+). Tryptophan 98 provides a ligand contact to substrate. FMN-binding positions include 113-119 (STATQHG) and histidine 134. The segment at 155 to 175 (VRGGAPYGMTTTSDTDGSRMP) is disordered.

The protein belongs to the WrbA family. It depends on FMN as a cofactor.

It carries out the reaction a quinone + NADH + H(+) = a quinol + NAD(+). The enzyme catalyses a quinone + NADPH + H(+) = a quinol + NADP(+). This chain is NAD(P)H dehydrogenase (quinone), found in Chelativorans sp. (strain BNC1).